Reading from the N-terminus, the 782-residue chain is General transcription and DNA repair factor IIH helicase/translocase subunit XPB (782 aa).

A compositionally biased stretch (basic and acidic residues) spans 1-11 (MGRKDKSDREK). 2 disordered regions span residues 1–47 (MGRK…VDES) and 211–242 (TISSKSAISKSQQDNGGPSSSQPADGQRSGTQ). The Nuclear localization signal signature appears at 6–17 (KSDREKKSKKRY). Positions 19 to 28 (EDEEEDEEVI) are enriched in acidic residues. Residues 211–223 (TISSKSAISKSQQ) show a composition bias toward low complexity. Residues 224-242 (DNGGPSSSQPADGQRSGTQ) show a composition bias toward polar residues. In terms of domain architecture, Helicase ATP-binding spans 326-487 (MFGNGRARSG…DLNFLIGPKL (162 aa)). 339 to 346 (LPCGAGKS) lines the ATP pocket. Residues 440 to 443 (DEVH) carry the DEVH box motif. The region spanning 541-701 (RACQFLIRFH…LAGMEEEDLM (161 aa)) is the Helicase C-terminal domain.

This sequence belongs to the helicase family. RAD25/XPB subfamily. Component of the 7-subunit TFIIH core complex composed of XPB/ERCC3, XPD/ERCC2, GTF2H1, GTF2H2, GTF2H3, GTF2H4 and GTF2H5, which is active in NER. The core complex associates with the 3-subunit CDK-activating kinase (CAK) module composed of CCNH/cyclin H, CDK7 and MNAT1 to form the 10-subunit holoenzyme (holo-TFIIH) active in transcription. Interacts with PUF60. Interacts with ATF7IP. Interacts with Epstein-Barr virus EBNA2.

The protein localises to the nucleus. The enzyme catalyses Couples ATP hydrolysis with the unwinding of duplex DNA by translocating in the 3'-5' direction.. It catalyses the reaction ATP + H2O = ADP + phosphate + H(+). Functionally, ATP-dependent 3'-5' DNA helicase/translocase; binds dsDNA rather than ssDNA, unzipping it in a translocase rather than classical helicase activity. Component of the general transcription and DNA repair factor IIH (TFIIH) core complex. When complexed to CDK-activating kinase (CAK), involved in RNA transcription by RNA polymerase II. The ATPase activity of XPB/ERCC3, but not its helicase activity, is required for DNA opening; it may wrap around the damaged DNA wedging it open, causing localized melting and twisting that allows XPD/ERCC2 helicase to anchor. The ATP-dependent helicase activity of XPB/ERCC3 may be required for promoter escape. Also involved in transcription-coupled nucleotide excision repair (NER) of damaged DNA. In NER, TFIIH acts by opening DNA around the lesion to allow the excision of the damaged oligonucleotide and its replacement by a new DNA fragment. This Danio rerio (Zebrafish) protein is General transcription and DNA repair factor IIH helicase/translocase subunit XPB (ercc3).